We begin with the raw amino-acid sequence, 339 residues long: Anthranilate phosphoribosyltransferase (339 aa).

Residues Gly81, 84 to 85 (GD), Ser89, 91 to 94 (NVSS), 109 to 117 (KHGNRALSS), and Ala121 each bind 5-phospho-alpha-D-ribose 1-diphosphate. Gly81 provides a ligand contact to anthranilate. Ser93 serves as a coordination point for Mg(2+). Asn112 is a binding site for anthranilate. Arg167 serves as a coordination point for anthranilate. Residues Asp225 and Glu226 each coordinate Mg(2+).

It belongs to the anthranilate phosphoribosyltransferase family. In terms of assembly, homodimer. Mg(2+) serves as cofactor.

It carries out the reaction N-(5-phospho-beta-D-ribosyl)anthranilate + diphosphate = 5-phospho-alpha-D-ribose 1-diphosphate + anthranilate. Its pathway is amino-acid biosynthesis; L-tryptophan biosynthesis; L-tryptophan from chorismate: step 2/5. Its function is as follows. Catalyzes the transfer of the phosphoribosyl group of 5-phosphorylribose-1-pyrophosphate (PRPP) to anthranilate to yield N-(5'-phosphoribosyl)-anthranilate (PRA). The protein is Anthranilate phosphoribosyltransferase of Brucella ovis (strain ATCC 25840 / 63/290 / NCTC 10512).